An 831-amino-acid chain; its full sequence is Periplasmic nitrate reductase (831 aa).

Positions 1-29 (MTLTRRDLIKAQAAATAAAAAGLPVSALA) form a signal peptide, tat-type signal. Residues 41-97 (IRWSKAPCRFCGTGCGVMVGTRDGQVVATHGDTQAEVNRGLNCVKGYFLSKIMYGED) form the 4Fe-4S Mo/W bis-MGD-type domain. [4Fe-4S] cluster is bound by residues C48, C51, C55, and C83. Residues K85, Q152, N177, C181, 214–221 (WGSNMAEM), 245–249 (STFTH), 264–266 (GTD), M375, Q379, N485, 511–512 (SD), K534, D561, and 721–730 (TGRVLEHWHS) each bind Mo-bis(molybdopterin guanine dinucleotide). A substrate-binding site is contributed by W797. Mo-bis(molybdopterin guanine dinucleotide)-binding residues include N805 and K822.

Belongs to the prokaryotic molybdopterin-containing oxidoreductase family. NasA/NapA/NarB subfamily. In terms of assembly, component of the periplasmic nitrate reductase NapAB complex composed of NapA and NapB. [4Fe-4S] cluster serves as cofactor. Requires Mo-bis(molybdopterin guanine dinucleotide) as cofactor. In terms of processing, predicted to be exported by the Tat system. The position of the signal peptide cleavage has not been experimentally proven.

The protein resides in the periplasm. It catalyses the reaction 2 Fe(II)-[cytochrome] + nitrate + 2 H(+) = 2 Fe(III)-[cytochrome] + nitrite + H2O. Catalytic subunit of the periplasmic nitrate reductase complex NapAB. Receives electrons from NapB and catalyzes the reduction of nitrate to nitrite. In Cereibacter sphaeroides (strain ATCC 17023 / DSM 158 / JCM 6121 / CCUG 31486 / LMG 2827 / NBRC 12203 / NCIMB 8253 / ATH 2.4.1.) (Rhodobacter sphaeroides), this protein is Periplasmic nitrate reductase.